The primary structure comprises 942 residues: Inter alpha-trypsin inhibitor, heavy chain 4 (942 aa).

Residues methionine 1–alanine 28 form the signal peptide. In terms of domain architecture, VIT spans glutamate 29 to glutamate 148. Asparagine 81 carries N-linked (GlcNAc...) asparagine glycosylation. Residues asparagine 274–valine 457 enclose the VWFA domain. 2 N-linked (GlcNAc...) asparagine glycosylation sites follow: asparagine 517 and asparagine 577. A coiled-coil region spans residues threonine 552–threonine 586. 2 disordered regions span residues arginine 658–serine 698 and glutamate 726–valine 745. Positions proline 663 to proline 690 are enriched in pro residues. O-linked (GalNAc...) threonine glycosylation occurs at threonine 732. The cysteines at positions 761 and 937 are disulfide-linked. N-linked (GlcNAc...) asparagine glycosylation occurs at asparagine 874.

Belongs to the ITIH family. Interacts (via C-terminus) with DNAJC1 (via SANT 2 domain). Post-translationally, may be O-glycosylated. N-glycosylated. Highly expressed in liver. Weak expression in lung and heart.

Its subcellular location is the secreted. Its function is as follows. Type II acute-phase protein (APP) involved in inflammatory responses to trauma. May also play a role in liver development or regeneration. The polypeptide is Inter alpha-trypsin inhibitor, heavy chain 4 (Itih4) (Mus musculus (Mouse)).